A 491-amino-acid chain; its full sequence is Chromosomal replication initiator protein DnaA (491 aa).

The interval 1–69 (MTTWDKCLKK…TIQECHGNDL (69 aa)) is domain I, interacts with DnaA modulators. A domain II region spans residues 69-154 (LIIEYSNKKF…KEDEEYSFGL (86 aa)). The interval 155–371 (PLKEKYVFDS…GALNRVLTTS (217 aa)) is domain III, AAA+ region. Positions 199, 201, 202, and 203 each coordinate ATP. The interval 372–491 (KFNHKDPTIE…YELLLDKISR (120 aa)) is domain IV, binds dsDNA.

This sequence belongs to the DnaA family. In terms of assembly, oligomerizes as a right-handed, spiral filament on DNA at oriC.

Its subcellular location is the cytoplasm. In terms of biological role, plays an essential role in the initiation and regulation of chromosomal replication. ATP-DnaA binds to the origin of replication (oriC) to initiate formation of the DNA replication initiation complex once per cell cycle. Binds the DnaA box (a 9 base pair repeat at the origin) and separates the double-stranded (ds)DNA. Forms a right-handed helical filament on oriC DNA; dsDNA binds to the exterior of the filament while single-stranded (ss)DNA is stabiized in the filament's interior. The ATP-DnaA-oriC complex binds and stabilizes one strand of the AT-rich DNA unwinding element (DUE), permitting loading of DNA polymerase. After initiation quickly degrades to an ADP-DnaA complex that is not apt for DNA replication. Binds acidic phospholipids. The sequence is that of Chromosomal replication initiator protein DnaA from Francisella tularensis subsp. holarctica (strain OSU18).